The sequence spans 286 residues: uncharacterized protein (286 aa).

The Radical SAM core domain occupies Val2 to Arg221. [4Fe-4S] cluster-binding residues include Cys16, Cys20, and Cys23.

Belongs to the radical SAM superfamily. Anaerobic sulfatase-maturating enzyme family. [4Fe-4S] cluster serves as cofactor.

This is an uncharacterized protein from Methanocaldococcus jannaschii (strain ATCC 43067 / DSM 2661 / JAL-1 / JCM 10045 / NBRC 100440) (Methanococcus jannaschii).